Here is a 181-residue protein sequence, read N- to C-terminus: MATTTHDAGHGAAEAAHGSSGMPQLDFSTYGNQIFWLLVTLVVIYLILSRIALPRIAAILNERQGTITNDLAAAEDLKAKAVEAENAYNKALADARAEAQRIAAETRAEIQAEVDEAIAKADAEISAKAAESEKAIAEIRAGALESVKVVAADTASALVAALGGKDDADAVKAAVAERTEG.

Residues 1 to 18 are compositionally biased toward low complexity; that stretch reads MATTTHDAGHGAAEAAHG. A disordered region spans residues 1–20; the sequence is MATTTHDAGHGAAEAAHGSS. The chain crosses the membrane as a helical span at residues 34 to 54; it reads IFWLLVTLVVIYLILSRIALP.

Belongs to the ATPase B chain family. As to quaternary structure, F-type ATPases have 2 components, F(1) - the catalytic core - and F(0) - the membrane proton channel. F(1) has five subunits: alpha(3), beta(3), gamma(1), delta(1), epsilon(1). F(0) has three main subunits: a(1), b(2) and c(10-14). The alpha and beta chains form an alternating ring which encloses part of the gamma chain. F(1) is attached to F(0) by a central stalk formed by the gamma and epsilon chains, while a peripheral stalk is formed by the delta and b chains.

Its subcellular location is the cell inner membrane. Its function is as follows. F(1)F(0) ATP synthase produces ATP from ADP in the presence of a proton or sodium gradient. F-type ATPases consist of two structural domains, F(1) containing the extramembraneous catalytic core and F(0) containing the membrane proton channel, linked together by a central stalk and a peripheral stalk. During catalysis, ATP synthesis in the catalytic domain of F(1) is coupled via a rotary mechanism of the central stalk subunits to proton translocation. Functionally, component of the F(0) channel, it forms part of the peripheral stalk, linking F(1) to F(0). The b'-subunit is a diverged and duplicated form of b found in plants and photosynthetic bacteria. The chain is ATP synthase subunit b 2 (atpF2) from Ruegeria sp. (strain TM1040) (Silicibacter sp.).